Here is a 218-residue protein sequence, read N- to C-terminus: Cytochrome c biogenesis ATP-binding export protein CcmA (218 aa).

The region spanning 2-217 (LEAKNLTCIR…KSCLSACCAV (216 aa)) is the ABC transporter domain. 34–41 (GPNGAGKT) provides a ligand contact to ATP.

Belongs to the ABC transporter superfamily. CcmA exporter (TC 3.A.1.107) family. As to quaternary structure, the complex is composed of two ATP-binding proteins (CcmA) and two transmembrane proteins (CcmB).

Its subcellular location is the cell inner membrane. The catalysed reaction is heme b(in) + ATP + H2O = heme b(out) + ADP + phosphate + H(+). Its function is as follows. Part of the ABC transporter complex CcmAB involved in the biogenesis of c-type cytochromes; once thought to export heme, this seems not to be the case, but its exact role is uncertain. Responsible for energy coupling to the transport system. This Yersinia pestis protein is Cytochrome c biogenesis ATP-binding export protein CcmA.